A 152-amino-acid polypeptide reads, in one-letter code: MKRFLLATCLVAVLLWEAGAIPAHQVPVKTKGKHVFPEQETEKAWGTRAMEPLEKDDQLRALLPVPKQKLAATEEKHSDTMTWVETKDILSRFRNPLQGPELDLDSIYHPMSEDVQNEEVPQSRPILYRQVLHGPEEDLDHISHSLEDSGEP.

The N-terminal stretch at 1 to 20 (MKRFLLATCLVAVLLWEAGA) is a signal peptide.

Interacts with MTTP. Interacts with MAD1L1. As to expression, highly expressed in the small intestine where it shows a proximal-distal graded expression.

The protein localises to the secreted. It localises to the endoplasmic reticulum. Lipid-binding protein which promotes lipid absorption by facilitating MTTP-mediated lipid transfer (mainly triglycerides and phospholipids) and MTTP-mediated apoB lipoprotein assembly and secretion. Protects the gastrointestinal epithelium from irradiation-induced apoptosis. May play an important role in maintaining normal growth homeostasis in epithelial cells. Involved in p53/TP53-dependent cell survival after DNA damage. In Rattus norvegicus (Rat), this protein is Proline-rich acidic protein 1 (Prap1).